Here is a 179-residue protein sequence, read N- to C-terminus: Large ribosomal subunit protein uL5 (179 aa).

Belongs to the universal ribosomal protein uL5 family. As to quaternary structure, part of the 50S ribosomal subunit; part of the 5S rRNA/L5/L18/L25 subcomplex. Contacts the 5S rRNA and the P site tRNA. Forms a bridge to the 30S subunit in the 70S ribosome.

This is one of the proteins that bind and probably mediate the attachment of the 5S RNA into the large ribosomal subunit, where it forms part of the central protuberance. In the 70S ribosome it contacts protein S13 of the 30S subunit (bridge B1b), connecting the 2 subunits; this bridge is implicated in subunit movement. Contacts the P site tRNA; the 5S rRNA and some of its associated proteins might help stabilize positioning of ribosome-bound tRNAs. The sequence is that of Large ribosomal subunit protein uL5 from Rickettsia akari (strain Hartford).